We begin with the raw amino-acid sequence, 689 residues long: DNA topoisomerase 1 (689 aa).

The Toprim domain occupies 3–113 (DNLVIVESPA…KENRVVFNEI (111 aa)). Glutamate 9 and aspartate 82 together coordinate Mg(2+). Residues 129–557 (EMNLVDAQQA…FFSSFKQDVE (429 aa)) form the Topo IA-type catalytic domain. The tract at residues 163-168 (SAGRVQ) is interaction with DNA. Tyrosine 298 (O-(5'-phospho-DNA)-tyrosine intermediate) is an active-site residue. The tract at residues 328 to 357 (SKRKASGKQGDQDAHEAIRPSSTMRTPDDM) is disordered. 3 C4-type zinc fingers span residues 577-603 (CEVC…FPDC), 617-645 (CPKC…YPEC), and 658-681 (CPKC…CSNC).

It belongs to the type IA topoisomerase family. Monomer. The cofactor is Mg(2+).

The enzyme catalyses ATP-independent breakage of single-stranded DNA, followed by passage and rejoining.. In terms of biological role, releases the supercoiling and torsional tension of DNA, which is introduced during the DNA replication and transcription, by transiently cleaving and rejoining one strand of the DNA duplex. Introduces a single-strand break via transesterification at a target site in duplex DNA. The scissile phosphodiester is attacked by the catalytic tyrosine of the enzyme, resulting in the formation of a DNA-(5'-phosphotyrosyl)-enzyme intermediate and the expulsion of a 3'-OH DNA strand. The free DNA strand then undergoes passage around the unbroken strand, thus removing DNA supercoils. Finally, in the religation step, the DNA 3'-OH attacks the covalent intermediate to expel the active-site tyrosine and restore the DNA phosphodiester backbone. This is DNA topoisomerase 1 from Staphylococcus aureus (strain N315).